The primary structure comprises 324 residues: Phospho-N-acetylmuramoyl-pentapeptide-transferase (324 aa).

The next 10 membrane-spanning stretches (helical) occupy residues 5 to 25, 57 to 77, 81 to 101, 117 to 137, 147 to 167, 176 to 196, 203 to 223, 227 to 247, 250 to 270, and 302 to 322; these read AIVI…PLFI, IMIL…IAGL, TYLL…DDMI, FIGQ…SGFS, WSVD…VGGS, LDGL…VLAW, VAVF…FNAH, VFMG…VAVL, LELL…SVII, and IVVT…YIEV.

Belongs to the glycosyltransferase 4 family. MraY subfamily. Mg(2+) is required as a cofactor.

Its subcellular location is the cell membrane. It catalyses the reaction UDP-N-acetyl-alpha-D-muramoyl-L-alanyl-gamma-D-glutamyl-meso-2,6-diaminopimeloyl-D-alanyl-D-alanine + di-trans,octa-cis-undecaprenyl phosphate = di-trans,octa-cis-undecaprenyl diphospho-N-acetyl-alpha-D-muramoyl-L-alanyl-D-glutamyl-meso-2,6-diaminopimeloyl-D-alanyl-D-alanine + UMP. The protein operates within cell wall biogenesis; peptidoglycan biosynthesis. Functionally, catalyzes the initial step of the lipid cycle reactions in the biosynthesis of the cell wall peptidoglycan: transfers peptidoglycan precursor phospho-MurNAc-pentapeptide from UDP-MurNAc-pentapeptide onto the lipid carrier undecaprenyl phosphate, yielding undecaprenyl-pyrophosphoryl-MurNAc-pentapeptide, known as lipid I. The polypeptide is Phospho-N-acetylmuramoyl-pentapeptide-transferase (Geobacillus kaustophilus (strain HTA426)).